The following is a 116-amino-acid chain: Iron-sulfur cluster insertion protein ErpA (116 aa).

Residues Cys44, Cys108, and Cys110 each coordinate iron-sulfur cluster.

This sequence belongs to the HesB/IscA family. Homodimer. Iron-sulfur cluster serves as cofactor.

Required for insertion of 4Fe-4S clusters for at least IspG. The polypeptide is Iron-sulfur cluster insertion protein ErpA (Shewanella piezotolerans (strain WP3 / JCM 13877)).